A 1073-amino-acid polypeptide reads, in one-letter code: Ubiquitin carboxyl-terminal hydrolase 53 (1073 aa).

Residues 30–351 enclose the USP domain; sequence KGLLNEPGQN…QPLLLFYANP (322 aa). Residue cysteine 41 is the Nucleophile of the active site. Zn(2+) is bound by residues histidine 66, cysteine 68, cysteine 73, cysteine 76, histidine 132, cysteine 144, cysteine 149, histidine 152, cysteine 165, cysteine 168, cysteine 224, and cysteine 228. The Proton acceptor role is filled by histidine 301. Disordered stretches follow at residues 391 to 437 and 485 to 636; these read LKEN…HIDQ and LSHF…PKQK. A compositionally biased stretch (polar residues) spans 407 to 418; the sequence is KFPTDNISSSNR. Residues 524–541 show a composition bias toward low complexity; it reads QSRASAQIISSSKSQILA. Over residues 553–563 the composition is skewed to polar residues; it reads DNGTGYDTDSS. Positions 612 to 627 are enriched in low complexity; the sequence is NISNKPKSSKDPSFSN.

This sequence belongs to the peptidase C19 family. As to quaternary structure, interacts (via the C-terminal region) with the heterodimer TJP1:TJP2. In terms of tissue distribution, expressed predominantly in skeletal muscle and heart.

Its subcellular location is the cell junction. The protein resides in the tight junction. It catalyses the reaction Thiol-dependent hydrolysis of ester, thioester, amide, peptide and isopeptide bonds formed by the C-terminal Gly of ubiquitin (a 76-residue protein attached to proteins as an intracellular targeting signal).. Functionally, deubiquitinase that mediates 'Lys-63'-linked deubiquitination of tight junction proteins, such as MARVELD2 and LSR, and which is involved in the survival of auditory hair cells and hearing. Specifically cleaves 'Lys-63'-linked polyubiquitin chains composed of at least 3 ubiquitin molecules, while it is not able to deubiquitinate substrates with shorter ubiquitin chains: recognizes ubiquitin chain in position S2 and catalyzes en bloc cleavage of polyubiquitin chains from substrate proteins. Probably acts by modulating the barrier properties and mechanical stability of tight junctions via deubiquitination of MARVELD2 and LSR. In Homo sapiens (Human), this protein is Ubiquitin carboxyl-terminal hydrolase 53.